We begin with the raw amino-acid sequence, 66 residues long: Large ribosomal subunit protein uL29c (66 aa).

It belongs to the universal ribosomal protein uL29 family.

It is found in the plastid. The protein localises to the chloroplast. The chain is Large ribosomal subunit protein uL29c from Gracilaria tenuistipitata var. liui (Red alga).